The chain runs to 1162 residues: Reticulon-4 (1162 aa).

N-acetylmethionine is present on methionine 1. Residues 1-183 (MEDIDQSSLV…ALPAASEPVI (183 aa)) form a disordered region. Residues 1 to 988 (MEDIDQSSLV…LYWRDIKKTG (988 aa)) are Cytoplasmic-facing. Phosphoserine occurs at positions 7 and 16. Residues 7–16 (SSLVSSSADS) are compositionally biased toward low complexity. A compositionally biased stretch (acidic residues) spans 31–54 (EPEDEEDEEDEEEEEDDEDLEELE). The segment covering 85–99 (PPAPRGPLPAAPPTA) has biased composition (pro residues). Serine 105 is subject to Phosphoserine. Residues 109–127 (SPAASAPSLPPAAAVLPSK) are compositionally biased toward low complexity. Phosphoserine is present on residues serine 145, serine 165, serine 167, serine 329, and serine 344. The residue at position 348 (threonine 348) is a Phosphothreonine. Residues 408–422 (SLEQKGHGKDSESRN) are compositionally biased toward basic and acidic residues. The tract at residues 408–432 (SLEQKGHGKDSESRNENASFPRTPE) is disordered. Position 426 is a phosphoserine (serine 426). Threonine 430 carries the post-translational modification Phosphothreonine. Phosphoserine occurs at positions 489, 690, 727, 768, and 832. The tract at residues 711 to 730 (ELVDDSSPESEPVDLFSDDS) is disordered. A compositionally biased stretch (acidic residues) spans 713 to 730 (VDDSSPESEPVDLFSDDS). The residue at position 834 (threonine 834) is a Phosphothreonine. Serine 857 and serine 961 each carry phosphoserine. One can recognise a Reticulon domain in the interval 975-1162 (VVDLLYWRDI…KIPGLKRKAE (188 aa)). The chain crosses the membrane as a helical span at residues 989-1009 (VVFGASLFLLLSLTVFSIVSV). Residues 1010-1078 (TAYIALALLS…VNSTIKELRR (69 aa)) are Lumenal-facing. An N6-acetyllysine modification is found at lysine 1074. A helical membrane pass occupies residues 1079–1099 (LFLVDDLVDSLKFAVLMWVFT). The Cytoplasmic segment spans residues 1100 to 1162 (YVGALFNGLT…KIPGLKRKAE (63 aa)).

Binds to RTN4R. Interacts with ATL1. Interacts with TMEM170A. Interacts with RTN4IP1. As to quaternary structure, interacts in trans with CNTNAP1. Interacts with REEP5. Interacts with GPR50. Interacts with synaptic plasticity regulator PANTS; the interaction results in enhanced RTN4-mediated inhibition of AMPA receptor clustering. In terms of assembly, homodimer. Interacts with BAD/Bcl-xl and BCL2. Interact with RTN3. Interacts with NGBR. Interacts with SPTLC1. Interacts with GRAMD4. Interacts with CDH5. Interacts with BACE1 and BACE2. Interacts with REEP5. Interacts with RETREG3. Interacts with BACE1 and BACE2. Interacts with TMEM33. In terms of tissue distribution, expressed in cardiomyocytes (at protein level). Highly expressed in brain but not deteceted in aorta, femoral and carotid arteries. Main isoform expressed in neurons. Expressed in cardiomyocytes (at protein level). Expressed in splenocytes, T-cells, B-cells, bone marrow derived dendritic cells and macrophages (at protein level). Expressed in neurons. Highly expressed in endothelial cells and vascular smooth muscle cells, including blood vessels and mesenteric arteries. Expressed in bronchial and alveolar epithelial cells as well as vascular endothelial cells of lungs. As to expression, expressed in B-cells, bone marrow dendritic cells and macrophages (at protein level). In terms of tissue distribution, expressed in cardiomyocytes. Expressed at very low levels in neurons.

The protein localises to the endoplasmic reticulum membrane. The protein resides in the cell membrane. Its subcellular location is the synapse. It localises to the cell junction. Required to induce the formation and stabilization of endoplasmic reticulum (ER) tubules. They regulate membrane morphogenesis in the ER by promoting tubular ER production. They influence nuclear envelope expansion, nuclear pore complex formation and proper localization of inner nuclear membrane proteins. However each isoform have specific functions mainly depending on their tissue expression specificities. Its function is as follows. Developmental neurite growth regulatory factor with a role as a negative regulator of axon-axon adhesion and growth, and as a facilitator of neurite branching. Regulates neurite fasciculation, branching and extension in the developing nervous system. Involved in down-regulation of growth, stabilization of wiring and restriction of plasticity in the adult CNS. Regulates the radial migration of cortical neurons via an RTN4R-LINGO1 containing receptor complex. Acts as a negative regulator of central nervous system angiogenesis. Inhibits spreading, migration and sprouting of primary brain microvascular endothelial cells (MVECs). Also induces the retraction of MVECs lamellipodia and filopodia in a ROCK pathway-dependent manner. In terms of biological role, mainly function in endothelial cells and vascular smooth muscle cells, is also involved in immune system regulation. Modulator of vascular remodeling, promotes the migration of endothelial cells but inhibits the migration of vascular smooth muscle cells. Regulates endothelial sphingolipid biosynthesis with direct effects on vascular function and blood pressure. Inhibits serine palmitoyltransferase, SPTLC1, the rate-limiting enzyme of the novo sphingolipid biosynthetic pathway, thereby controlling production of endothelial sphingosine-1-phosphate (S1P). Required to promote macrophage homing and functions such as cytokine/chemokine gene expression involved in angiogenesis, arteriogenesis and tissue repair. Mediates ICAM1 induced transendothelial migration of leukocytes such as monocytes and neutrophils and acute inflammation. Necessary for immune responses triggered by nucleic acid sensing TLRs, such as TLR9, is required for proper TLR9 location to endolysosomes. Also involved in immune response to LPS. Plays a role in liver regeneration through the modulation of hepatocytes proliferation. Reduces the anti-apoptotic activity of Bcl-xl and Bcl-2. This is likely consecutive to their change in subcellular location, from the mitochondria to the endoplasmic reticulum, after binding and sequestration. With isoform C, inhibits BACE1 activity and amyloid precursor protein processing. Functionally, regulates cardiomyocyte apoptosis upon hypoxic conditions. With isoform B, inhibits BACE1 activity and amyloid precursor protein processing. This is Reticulon-4 from Mus musculus (Mouse).